We begin with the raw amino-acid sequence, 391 residues long: Elongation factor Tu (391 aa).

Residues 10 to 201 (KPHVNIGTIG…AVDDYIPTPE (192 aa)) form the tr-type G domain. The segment at 19–26 (GHVDHGKT) is G1. Residue 19-26 (GHVDHGKT) coordinates GTP. Position 26 (Thr26) interacts with Mg(2+). The interval 55-59 (GITIS) is G2. The tract at residues 76 to 79 (DCPG) is G3. Residues 76–80 (DCPGH) and 131–134 (NKCD) each bind GTP. The segment at 131 to 134 (NKCD) is G4. Positions 169 to 171 (SAL) are G5.

This sequence belongs to the TRAFAC class translation factor GTPase superfamily. Classic translation factor GTPase family. EF-Tu/EF-1A subfamily. In terms of assembly, monomer.

It localises to the cytoplasm. The enzyme catalyses GTP + H2O = GDP + phosphate + H(+). Functionally, GTP hydrolase that promotes the GTP-dependent binding of aminoacyl-tRNA to the A-site of ribosomes during protein biosynthesis. This Brucella anthropi (strain ATCC 49188 / DSM 6882 / CCUG 24695 / JCM 21032 / LMG 3331 / NBRC 15819 / NCTC 12168 / Alc 37) (Ochrobactrum anthropi) protein is Elongation factor Tu.